Consider the following 235-residue polypeptide: MRGILIAIEGINGVEKSTQAIRLKNALENKRYDVIYLHFPSPNTDTGKLILDVLNKIVKMPSEQLHELFTKHRCEFTAEIAALLKLNYIVIVDRYIWSGLAYAQADRIMIDTKNTFNPDYTFFLSPNKSLNEKPLHLQRLYETEEKQEIIFTQFINIINEVPKNKFCAIPANLNKEIIDKIIFSKTIKVFEKNLNLDYIKMYDGMYFNVHDLDLIHFDWQKCIEEDDGIDEEYGL.

Position 10–17 (10–17 (GINGVEKS)) interacts with ATP.

This sequence belongs to the thymidylate kinase family.

The enzyme catalyses dTMP + ATP = dTDP + ADP. Its pathway is pyrimidine metabolism; dTTP biosynthesis. Functionally, catalyzes the conversion of dTMP to dTDP. The chain is Thymidylate kinase (TMK) from African swine fever virus (isolate Pig/Kenya/KEN-50/1950) (ASFV).